Consider the following 380-residue polypeptide: Chaperone protein DnaJ (380 aa).

The 68-residue stretch at 5–72 (DYYETLGVAK…QKRAAYDQYG (68 aa)) folds into the J domain. The segment at 140 to 218 (GKDTQIRIPS…CNGAGRIKSN (79 aa)) adopts a CR-type zinc-finger fold. Zn(2+) is bound by residues Cys153, Cys156, Cys170, Cys173, Cys192, Cys195, Cys206, and Cys209. CXXCXGXG motif repeat units follow at residues 153-160 (CSTCDGTG), 170-177 (CPTCSGSG), 192-199 (CPSCHGTG), and 206-213 (CTACNGAG). Positions 357 to 380 (LKKGGERHSPNAKSWTDRVKDLFK) are disordered.

The protein belongs to the DnaJ family. In terms of assembly, homodimer. Zn(2+) is required as a cofactor.

It is found in the cytoplasm. Participates actively in the response to hyperosmotic and heat shock by preventing the aggregation of stress-denatured proteins and by disaggregating proteins, also in an autonomous, DnaK-independent fashion. Unfolded proteins bind initially to DnaJ; upon interaction with the DnaJ-bound protein, DnaK hydrolyzes its bound ATP, resulting in the formation of a stable complex. GrpE releases ADP from DnaK; ATP binding to DnaK triggers the release of the substrate protein, thus completing the reaction cycle. Several rounds of ATP-dependent interactions between DnaJ, DnaK and GrpE are required for fully efficient folding. Also involved, together with DnaK and GrpE, in the DNA replication of plasmids through activation of initiation proteins. The chain is Chaperone protein DnaJ from Methylibium petroleiphilum (strain ATCC BAA-1232 / LMG 22953 / PM1).